The sequence spans 292 residues: 1D-myo-inositol 2-acetamido-2-deoxy-alpha-D-glucopyranoside deacetylase (292 aa).

Residues His12, Asp15, and His147 each coordinate Zn(2+).

The protein belongs to the MshB deacetylase family. Zn(2+) is required as a cofactor.

The enzyme catalyses 1D-myo-inositol 2-acetamido-2-deoxy-alpha-D-glucopyranoside + H2O = 1D-myo-inositol 2-amino-2-deoxy-alpha-D-glucopyranoside + acetate. Functionally, catalyzes the deacetylation of 1D-myo-inositol 2-acetamido-2-deoxy-alpha-D-glucopyranoside (GlcNAc-Ins) in the mycothiol biosynthesis pathway. The chain is 1D-myo-inositol 2-acetamido-2-deoxy-alpha-D-glucopyranoside deacetylase from Rhodococcus jostii (strain RHA1).